Here is a 267-residue protein sequence, read N- to C-terminus: Glutamate racemase (267 aa).

Substrate is bound by residues 10–11 (DS) and 42–43 (YG). The Proton donor/acceptor role is filled by Cys-73. 74–75 (NT) provides a ligand contact to substrate. Catalysis depends on Cys-183, which acts as the Proton donor/acceptor. 184-185 (TH) contacts substrate.

Belongs to the aspartate/glutamate racemases family.

It catalyses the reaction L-glutamate = D-glutamate. It functions in the pathway cell wall biogenesis; peptidoglycan biosynthesis. Its function is as follows. Provides the (R)-glutamate required for cell wall biosynthesis. The protein is Glutamate racemase of Limosilactobacillus reuteri (strain DSM 20016) (Lactobacillus reuteri).